The primary structure comprises 89 residues: Small ribosomal subunit protein uS14 (89 aa).

Belongs to the universal ribosomal protein uS14 family. Part of the 30S ribosomal subunit. Contacts proteins S3 and S10.

In terms of biological role, binds 16S rRNA, required for the assembly of 30S particles and may also be responsible for determining the conformation of the 16S rRNA at the A site. The protein is Small ribosomal subunit protein uS14 of Leuconostoc mesenteroides subsp. mesenteroides (strain ATCC 8293 / DSM 20343 / BCRC 11652 / CCM 1803 / JCM 6124 / NCDO 523 / NBRC 100496 / NCIMB 8023 / NCTC 12954 / NRRL B-1118 / 37Y).